The chain runs to 266 residues: Interleukin-1 beta (266 aa).

The propeptide occupies 1 to 113 (MATVPEPINE…ETSSDELLCD (113 aa)).

It belongs to the IL-1 family. As to quaternary structure, monomer. In its precursor form, weakly interacts with full-length MEFV; the mature cytokine does not interact at all. Interacts with integrins ITGAV:ITGBV and ITGA5:ITGB1; integrin-binding is required for IL1B signaling. Interacts with cargo receptor TMED10; the interaction is direct and is required for the secretion of IL1B mature form. Interacts with HSP90AB1; the interaction facilitates cargo translocation into the ERGIC. Interacts with HSP90B1; the interaction facilitates cargo translocation into the ERGIC.

It localises to the cytoplasm. Its subcellular location is the cytosol. The protein resides in the secreted. It is found in the lysosome. The protein localises to the extracellular exosome. Its function is as follows. Potent pro-inflammatory cytokine. Initially discovered as the major endogenous pyrogen, induces prostaglandin synthesis, neutrophil influx and activation, T-cell activation and cytokine production, B-cell activation and antibody production, and fibroblast proliferation and collagen production. Promotes Th17 differentiation of T-cells. Synergizes with IL12/interleukin-12 to induce IFNG synthesis from T-helper 1 (Th1) cells. Plays a role in angiogenesis by inducing VEGF production synergistically with TNF and IL6. Involved in transduction of inflammation downstream of pyroptosis: its mature form is specifically released in the extracellular milieu by passing through the gasdermin-D (GSDMD) pore. The polypeptide is Interleukin-1 beta (IL1B) (Capra hircus (Goat)).